The sequence spans 418 residues: MHIFDELKERGLIFQTTDEEALRKALEEGQVSYYTGYDPTADSLHLGHLVAILTSRRLQLAGHKPYALVGGATGLIGDPSFKDAERSLQTKDTVDGWVKSIQGQLSRFLDFENGENKAVMVNNYDWFGSISFIDFLRDIGKYFTVNYMMSKESVKKRIETGISYTEFAYQIMQGYDFFVLNQDHNVTLQIGGSDQWGNMTAGTELLRRKADKTGHVITVPLITDATGKKFGKSEGNAVWLNPEKTSPYEMYQFWMNVMDADAVRFLKIFTFLSLDEIEDIRKQFEAAPHERLAQKVLAREVVTLVHGEEAYKEALNITEQLFAGNIKNLSVKELKQGLRGVPNYQVQADENNNIVELLVSSGIVNSKRQAREDVQNGAIYVNGDRIQELDYVLSDADKLENELTVIRRGKKKYFVLTY.

An L-tyrosine-binding site is contributed by Tyr-34. The short motif at 39-48 is the 'HIGH' region element; it reads PTADSLHLGH. L-tyrosine-binding residues include Tyr-169 and Gln-173. Positions 229-233 match the 'KMSKS' region motif; sequence KFGKS. Residue Lys-232 coordinates ATP. An S4 RNA-binding domain is found at 352–418; that stretch reads NNIVELLVSS…GKKKYFVLTY (67 aa).

The protein belongs to the class-I aminoacyl-tRNA synthetase family. TyrS type 1 subfamily. As to quaternary structure, homodimer.

It is found in the cytoplasm. It catalyses the reaction tRNA(Tyr) + L-tyrosine + ATP = L-tyrosyl-tRNA(Tyr) + AMP + diphosphate + H(+). Functionally, catalyzes the attachment of tyrosine to tRNA(Tyr) in a two-step reaction: tyrosine is first activated by ATP to form Tyr-AMP and then transferred to the acceptor end of tRNA(Tyr). This Streptococcus pneumoniae (strain ATCC BAA-255 / R6) protein is Tyrosine--tRNA ligase.